The following is a 637-amino-acid chain: Probable ATP-binding protein YheS (637 aa).

2 consecutive ABC transporter domains span residues 2–246 (IVFS…AQQQ) and 313–527 (LKME…KQEN). ATP-binding positions include 34-41 (GKNGCGKS) and 345-352 (GRNGAGKS). Residues 523-559 (QKQENQTDEAPKENANSAQARKDQKRREAELRAQTQP) are disordered. Over residues 542–553 (ARKDQKRREAEL) the composition is skewed to basic and acidic residues.

The protein belongs to the ABC transporter superfamily. ABCF family. YheS subfamily.

Its function is as follows. Genetic data indicate it may be involved in ribosome assembly or function. This chain is Probable ATP-binding protein YheS (yheS), found in Escherichia coli O157:H7.